The primary structure comprises 166 residues: Ribosome maturation factor RimP (166 aa).

This sequence belongs to the RimP family.

The protein resides in the cytoplasm. Its function is as follows. Required for maturation of 30S ribosomal subunits. This chain is Ribosome maturation factor RimP, found in Paramagnetospirillum magneticum (strain ATCC 700264 / AMB-1) (Magnetospirillum magneticum).